A 124-amino-acid chain; its full sequence is Small ribosomal subunit protein uS12 (124 aa).

Asp89 bears the 3-methylthioaspartic acid mark.

It belongs to the universal ribosomal protein uS12 family. Part of the 30S ribosomal subunit. Contacts proteins S8 and S17. May interact with IF1 in the 30S initiation complex.

Functionally, with S4 and S5 plays an important role in translational accuracy. Its function is as follows. Interacts with and stabilizes bases of the 16S rRNA that are involved in tRNA selection in the A site and with the mRNA backbone. Located at the interface of the 30S and 50S subunits, it traverses the body of the 30S subunit contacting proteins on the other side and probably holding the rRNA structure together. The combined cluster of proteins S8, S12 and S17 appears to hold together the shoulder and platform of the 30S subunit. The sequence is that of Small ribosomal subunit protein uS12 from Psychrobacter sp. (strain PRwf-1).